The primary structure comprises 313 residues: Putative S-adenosyl-L-methionine-dependent methyltransferase MAP_4064c (313 aa).

S-adenosyl-L-methionine-binding positions include D129 and 158 to 159; that span reads DL.

This sequence belongs to the UPF0677 family.

Functionally, exhibits S-adenosyl-L-methionine-dependent methyltransferase activity. The sequence is that of Putative S-adenosyl-L-methionine-dependent methyltransferase MAP_4064c from Mycolicibacterium paratuberculosis (strain ATCC BAA-968 / K-10) (Mycobacterium paratuberculosis).